The following is a 278-amino-acid chain: Tryptophan synthase alpha chain (278 aa).

Catalysis depends on proton acceptor residues Glu50 and Asp61.

Belongs to the TrpA family. In terms of assembly, tetramer of two alpha and two beta chains.

It catalyses the reaction (1S,2R)-1-C-(indol-3-yl)glycerol 3-phosphate + L-serine = D-glyceraldehyde 3-phosphate + L-tryptophan + H2O. It participates in amino-acid biosynthesis; L-tryptophan biosynthesis; L-tryptophan from chorismate: step 5/5. Its function is as follows. The alpha subunit is responsible for the aldol cleavage of indoleglycerol phosphate to indole and glyceraldehyde 3-phosphate. The chain is Tryptophan synthase alpha chain from Rhodopseudomonas palustris (strain HaA2).